We begin with the raw amino-acid sequence, 453 residues long: MPVSRMMMESNTMAKEMAVRHHLLPGSPRRRTAHNLSSSSLRKSSDASLLHKVPCAALRSLLANLNDVLLTTRLFLLFPAVLLAIAATYLHFGQVWVFVLSLIGLVPLAERLSFLTEQIAFYTGPTVGGLLNATFGNVTEVIIALLALREGKIEVVKCSLLGSILSNLLLVLGTSLFLAGIANLRAHQPYDTKQAHVNTALLMLAVLCHSLPLMLRYAVTSGDHAIVSGDAALHLSRACSILMLIAYLAYLFFQLNTHRQLFEPQQVEDDDDDDLVIAQDDEPVLGFSSAMIWLALMTLLTALLSGYVVSTIEAASESWELSVSFISIILLPIVGNAAEHAGAVIFALKNKMDITLGVSLGSATQISMFVVPVSVIVAWTMGIPMDLDFNLLETGSLFLAILVTAFTLQEGESHYLKGLILVLCYAVISVCFFVIRRRSAGGTDGVHHLDVIV.

At 1–67 (MPVSRMMMES…LRSLLANLND (67 aa)) the chain is on the cytoplasmic side. Residues 68-85 (VLLTTRLFLLFPAVLLAI) form a helical membrane-spanning segment. Residues 86-91 (AATYLH) lie on the Extracellular side of the membrane. The helical transmembrane segment at 92–109 (FGQVWVFVLSLIGLVPLA) threads the bilayer. Topologically, residues 110-126 (ERLSFLTEQIAFYTGPT) are cytoplasmic. The helical transmembrane segment at 127-147 (VGGLLNATFGNVTEVIIALLA) threads the bilayer. Positions 136–171 (GNVTEVIIALLALREGKIEVVKCSLLGSILSNLLLV) are cation selection. Residues 148 to 160 (LREGKIEVVKCSL) lie on the Extracellular side of the membrane. The helical transmembrane segment at 161 to 181 (LGSILSNLLLVLGTSLFLAGI) threads the bilayer. The Cytoplasmic segment spans residues 182–194 (ANLRAHQPYDTKQ). A helical transmembrane segment spans residues 195–215 (AHVNTALLMLAVLCHSLPLML). Topologically, residues 216–232 (RYAVTSGDHAIVSGDAA) are extracellular. Residues 233–253 (LHLSRACSILMLIAYLAYLFF) traverse the membrane as a helical segment. The Cytoplasmic segment spans residues 254–283 (QLNTHRQLFEPQQVEDDDDDDLVIAQDDEP). A helical membrane pass occupies residues 284–304 (VLGFSSAMIWLALMTLLTALL). Residues 305–327 (SGYVVSTIEAASESWELSVSFIS) lie on the Extracellular side of the membrane. A helical membrane pass occupies residues 328–348 (IILLPIVGNAAEHAGAVIFAL). The tract at residues 335–370 (GNAAEHAGAVIFALKNKMDITLGVSLGSATQISMFV) is cation selection. Over 349–364 (KNKMDITLGVSLGSAT) the chain is Cytoplasmic. The helical transmembrane segment at 365–385 (QISMFVVPVSVIVAWTMGIPM) threads the bilayer. Residues 386-388 (DLD) are Extracellular-facing. Residues 389 to 409 (FNLLETGSLFLAILVTAFTLQ) form a helical membrane-spanning segment. At 410 to 414 (EGESH) the chain is on the cytoplasmic side. Residues 415-435 (YLKGLILVLCYAVISVCFFVI) traverse the membrane as a helical segment. Residues 436-453 (RRRSAGGTDGVHHLDVIV) are Extracellular-facing.

Belongs to the Ca(2+):cation antiporter (CaCA) (TC 2.A.19) family. Cation/proton exchanger (CAX) subfamily. Expressed in embryo and roots.

Its subcellular location is the vacuole membrane. Its function is as follows. Vacuolar cation/proton exchanger (CAX). Translocates Ca(2+) and other metal ions into vacuoles using the proton gradient formed by H(+)-ATPase and H(+)-pyrophosphatase. In Oryza sativa subsp. japonica (Rice), this protein is Vacuolar cation/proton exchanger 1b (CAX1b).